A 242-amino-acid chain; its full sequence is Aquaporin (242 aa).

The Cytoplasmic portion of the chain corresponds to M1–K11. A helical transmembrane segment spans residues L12 to N32. Residues T33 to S39 lie on the Extracellular side of the membrane. Residues I40–F60 traverse the membrane as a helical segment. The Cytoplasmic portion of the chain corresponds to C61–D83. Positions N69 to A71 match the NPA motif. Residues I84–L104 traverse the membrane as a helical segment. At T105–N133 the chain is on the extracellular side. The helical transmembrane segment at L134–I154 threads the bilayer. The Cytoplasmic segment spans residues N155–K175. The helical transmembrane segment at F176 to S196 threads the bilayer. The Extracellular segment spans residues G197 to D217. The short motif at N201–G203 is the NPG element. Residues F218–F238 form a helical membrane-spanning segment. Over L239–K242 the chain is Cytoplasmic.

The protein belongs to the MIP/aquaporin (TC 1.A.8) family.

The protein localises to the cell membrane. Functionally, water channel required to facilitate the transport of water across membranes. Involved in osmotolerance. In Enterocytozoon bieneusi (strain H348) (Microsporidian parasite), this protein is Aquaporin (AQP).